Here is a 346-residue protein sequence, read N- to C-terminus: Dihydroorotase (346 aa).

Zn(2+)-binding residues include H13 and H15. Residues 15 to 17 (HLR) and N41 each bind substrate. Residues K99, H136, and H174 each contribute to the Zn(2+) site. K99 carries the N6-carboxylysine modification. Position 136 (H136) interacts with substrate. A substrate-binding site is contributed by L219. D247 lines the Zn(2+) pocket. D247 is an active-site residue. H251 and A263 together coordinate substrate.

This sequence belongs to the metallo-dependent hydrolases superfamily. DHOase family. Class II DHOase subfamily. As to quaternary structure, homodimer. The cofactor is Zn(2+).

It carries out the reaction (S)-dihydroorotate + H2O = N-carbamoyl-L-aspartate + H(+). Its pathway is pyrimidine metabolism; UMP biosynthesis via de novo pathway; (S)-dihydroorotate from bicarbonate: step 3/3. Functionally, catalyzes the reversible cyclization of carbamoyl aspartate to dihydroorotate. The chain is Dihydroorotase from Picosynechococcus sp. (strain ATCC 27264 / PCC 7002 / PR-6) (Agmenellum quadruplicatum).